A 101-amino-acid polypeptide reads, in one-letter code: Multivesicular body sorting factor 12 (101 aa).

M1 carries the N-acetylmethionine modification. A Phosphoserine modification is found at S94.

In terms of assembly, component of the ESCRT-I complex (endosomal sorting complex required for transport I) which consists of STP22, VPS28, SRN2 and MVB12 in a 1:1:1:1 stoichiometry. Interacts with STP22 and SRN2.

It localises to the cytoplasm. Its subcellular location is the endosome. The protein localises to the late endosome membrane. Functionally, component of the ESCRT-I complex, a regulator of vesicular trafficking process. Binds to ubiquitinated cargo proteins and is required for the sorting of endocytic ubiquitinated cargos into multivesicular bodies (MVBs). Appears to be involved in cargo sorting and release of the ESCRT-I complex from the MVBs. This is Multivesicular body sorting factor 12 (MVB12) from Saccharomyces cerevisiae (strain ATCC 204508 / S288c) (Baker's yeast).